The following is a 659-amino-acid chain: Putative RING finger protein R311 (659 aa).

Residues 502–540 (CPVCYDDDYIKTKLICGHTVCLTCVLNILPNSKGCPLCM) form an RING-type zinc finger.

The chain is Putative RING finger protein R311 from Acanthamoeba polyphaga (Amoeba).